The following is a 458-amino-acid chain: Probable beta-eliminating lyase (458 aa).

N6-(pyridoxal phosphate)lysine is present on K257.

It belongs to the beta-eliminating lyase family. The cofactor is pyridoxal 5'-phosphate.

The protein is Probable beta-eliminating lyase of Trichomonas vaginalis (strain ATCC PRA-98 / G3).